We begin with the raw amino-acid sequence, 468 residues long: Glutamate--tRNA ligase (468 aa).

The 'HIGH' region motif lies at proline 10–glycine 20. The 'KMSKS' region signature appears at lysine 252–arginine 256. Lysine 255 provides a ligand contact to ATP.

This sequence belongs to the class-I aminoacyl-tRNA synthetase family. Glutamate--tRNA ligase type 1 subfamily. Monomer.

Its subcellular location is the cytoplasm. The catalysed reaction is tRNA(Glu) + L-glutamate + ATP = L-glutamyl-tRNA(Glu) + AMP + diphosphate. Catalyzes the attachment of glutamate to tRNA(Glu) in a two-step reaction: glutamate is first activated by ATP to form Glu-AMP and then transferred to the acceptor end of tRNA(Glu). This is Glutamate--tRNA ligase from Mycoplasmopsis pulmonis (strain UAB CTIP) (Mycoplasma pulmonis).